We begin with the raw amino-acid sequence, 358 residues long: 5,10-methenyltetrahydromethanopterin hydrogenase (358 aa).

Belongs to the HMD family. In terms of assembly, homotetramer.

The catalysed reaction is 5,10-methenyl-5,6,7,8-tetrahydromethanopterin + H2 = 5,10-methylenetetrahydromethanopterin + H(+). It participates in one-carbon metabolism; methanogenesis from CO(2); 5,10-methylene-5,6,7,8-tetrahydromethanopterin from 5,10-methenyl-5,6,7,8-tetrahydromethanopterin (hydrogen route): step 1/1. Its activity is regulated as follows. Activity requires salt; 100 mM potassium phosphate, potassium chloride, and sodium chloride are equally effective. Its function is as follows. Catalyzes the reversible reduction of methenyl-H(4)MPT(+) to methylene-H(4)MPT. The chain is 5,10-methenyltetrahydromethanopterin hydrogenase from Methanopyrus kandleri (strain AV19 / DSM 6324 / JCM 9639 / NBRC 100938).